A 602-amino-acid polypeptide reads, in one-letter code: Elongation factor 4 (602 aa).

Positions 7–188 constitute a tr-type G domain; it reads ENIRNFSIIA…AIIELIPPPK (182 aa). GTP contacts are provided by residues 19–24 and 135–138; these read DHGKST and NKID.

Belongs to the TRAFAC class translation factor GTPase superfamily. Classic translation factor GTPase family. LepA subfamily.

The protein resides in the cell inner membrane. It carries out the reaction GTP + H2O = GDP + phosphate + H(+). Required for accurate and efficient protein synthesis under certain stress conditions. May act as a fidelity factor of the translation reaction, by catalyzing a one-codon backward translocation of tRNAs on improperly translocated ribosomes. Back-translocation proceeds from a post-translocation (POST) complex to a pre-translocation (PRE) complex, thus giving elongation factor G a second chance to translocate the tRNAs correctly. Binds to ribosomes in a GTP-dependent manner. This Chlamydia caviae (strain ATCC VR-813 / DSM 19441 / 03DC25 / GPIC) (Chlamydophila caviae) protein is Elongation factor 4.